Here is a 169-residue protein sequence, read N- to C-terminus: S-ribosylhomocysteine lyase (169 aa).

Residues His-54, His-58, and Cys-128 each coordinate Fe cation.

This sequence belongs to the LuxS family. Homodimer. Fe cation serves as cofactor.

It carries out the reaction S-(5-deoxy-D-ribos-5-yl)-L-homocysteine = (S)-4,5-dihydroxypentane-2,3-dione + L-homocysteine. Involved in the synthesis of autoinducer 2 (AI-2) which is secreted by bacteria and is used to communicate both the cell density and the metabolic potential of the environment. The regulation of gene expression in response to changes in cell density is called quorum sensing. Catalyzes the transformation of S-ribosylhomocysteine (RHC) to homocysteine (HC) and 4,5-dihydroxy-2,3-pentadione (DPD). In Shewanella sp. (strain ANA-3), this protein is S-ribosylhomocysteine lyase.